We begin with the raw amino-acid sequence, 305 residues long: UDP-3-O-acyl-N-acetylglucosamine deacetylase (305 aa).

Residues H78, H237, and D241 each coordinate Zn(2+). The active-site Proton donor is H264.

The protein belongs to the LpxC family. Zn(2+) serves as cofactor.

It carries out the reaction a UDP-3-O-[(3R)-3-hydroxyacyl]-N-acetyl-alpha-D-glucosamine + H2O = a UDP-3-O-[(3R)-3-hydroxyacyl]-alpha-D-glucosamine + acetate. The protein operates within glycolipid biosynthesis; lipid IV(A) biosynthesis; lipid IV(A) from (3R)-3-hydroxytetradecanoyl-[acyl-carrier-protein] and UDP-N-acetyl-alpha-D-glucosamine: step 2/6. Catalyzes the hydrolysis of UDP-3-O-myristoyl-N-acetylglucosamine to form UDP-3-O-myristoylglucosamine and acetate, the committed step in lipid A biosynthesis. This is UDP-3-O-acyl-N-acetylglucosamine deacetylase from Burkholderia ambifaria (strain MC40-6).